Here is a 178-residue protein sequence, read N- to C-terminus: MAAPLGGMFSGQQPGPPQPPPGLLGQASLLQATPGVPRTSNSTLVDELESSFEACFASLVSQDYVNGTDQEEIRTGVDQCIKKFLDIARQTECFFLQKRLQLSVQKPEQVIKEDVSELRNELQRKDALVQKHLTKLRHWQQVLEDINMQHKKPADIPQGSLAYLEQASANIPAPMKQT.

The disordered stretch occupies residues 1–25; sequence MAAPLGGMFSGQQPGPPQPPPGLLG. Residues 109–145 are a coiled coil; the sequence is QVIKEDVSELRNELQRKDALVQKHLTKLRHWQQVLED.

Belongs to the Mediator complex subunit 28 family. In terms of assembly, component of the Mediator complex, which is composed of MED1, MED4, MED6, MED7, MED8, MED9, MED10, MED11, MED12, MED13, MED13L, MED14, MED15, MED16, MED17, MED18, MED19, MED20, MED21, MED22, MED23, MED24, MED25, MED26, MED27, MED29, MED30, MED31, CCNC, CDK8 and CDC2L6/CDK11. The MED12, MED13, CCNC and CDK8 subunits form a distinct module termed the CDK8 module. Mediator containing the CDK8 module is less active than Mediator lacking this module in supporting transcriptional activation. Individual preparations of the Mediator complex lacking one or more distinct subunits have been variously termed ARC, CRSP, DRIP, PC2, SMCC and TRAP. Forms a ternary complex with NF2/merlin and GRB2. Binds to actin.

The protein resides in the nucleus. It localises to the cytoplasm. Its subcellular location is the membrane. Its function is as follows. Component of the Mediator complex, a coactivator involved in the regulated transcription of nearly all RNA polymerase II-dependent genes. Mediator functions as a bridge to convey information from gene-specific regulatory proteins to the basal RNA polymerase II transcription machinery. Mediator is recruited to promoters by direct interactions with regulatory proteins and serves as a scaffold for the assembly of a functional preinitiation complex with RNA polymerase II and the general transcription factors. May be part of a complex containing NF2/merlin that participates in cellular signaling to the actin cytoskeleton downstream of tyrosine kinase signaling pathways. This Bos taurus (Bovine) protein is Mediator of RNA polymerase II transcription subunit 28 (MED28).